The primary structure comprises 373 residues: MTSRYPSFAAEILDLFAEREAVLTDIAIIQPADPFLDMAGEDLRRRIFLTESETGETLCLRPEFTIPVCLDHIEKRASTPRRYAYLGEVFRQHREGSPEFFQAGVEDLGAKDRPAADARSLADARAILSCVLPNTGFHVTLGDQAVFEAVLSALGLPRGWQKRLARAFGSPAMLEAAIAEFTSPQGTANLPREVASLVAQGNEQRLTHHIEEAMQAAGHSPTAGREPDEIARRLLEKAALRSVRLSDAALNALKSFLAIKVPLEQAGERLTAFADEAGIFLDEALADFSARAERIGDHALPLDEIRYDAGFGRPLDYYTGFIFEIGVEGLRQPLVGGGRYDRLLTLLGAEEPIPGVGFSMWLDRIATVRGEKP.

Belongs to the class-II aminoacyl-tRNA synthetase family. HisZ subfamily. Heteromultimer composed of HisG and HisZ subunits.

It is found in the cytoplasm. Its pathway is amino-acid biosynthesis; L-histidine biosynthesis; L-histidine from 5-phospho-alpha-D-ribose 1-diphosphate: step 1/9. In terms of biological role, required for the first step of histidine biosynthesis. May allow the feedback regulation of ATP phosphoribosyltransferase activity by histidine. This Chelativorans sp. (strain BNC1) protein is ATP phosphoribosyltransferase regulatory subunit.